Consider the following 154-residue polypeptide: tRNA-splicing endonuclease (154 aa).

Residues Y86, H102, and K133 contribute to the active site.

This sequence belongs to the tRNA-intron endonuclease family. Archaeal short subfamily. In terms of assembly, homotetramer; although the tetramer contains four active sites, only two participate in the cleavage. Therefore, it should be considered as a dimer of dimers.

The enzyme catalyses pretRNA = a 3'-half-tRNA molecule with a 5'-OH end + a 5'-half-tRNA molecule with a 2',3'-cyclic phosphate end + an intron with a 2',3'-cyclic phosphate and a 5'-hydroxyl terminus.. Endonuclease that removes tRNA introns. Cleaves pre-tRNA at the 5'- and 3'-splice sites to release the intron. The products are an intron and two tRNA half-molecules bearing 2',3' cyclic phosphate and 5'-OH termini. Recognizes a pseudosymmetric substrate in which 2 bulged loops of 3 bases are separated by a stem of 4 bp. This Nanoarchaeum equitans (strain Kin4-M) protein is tRNA-splicing endonuclease.